Reading from the N-terminus, the 266-residue chain is Glucosamine-6-phosphate deaminase (266 aa).

Aspartate 72 acts as the Proton acceptor; for enolization step in catalysis. Residue aspartate 141 is the For ring-opening step of the active site. Histidine 143 acts as the Proton acceptor; for ring-opening step in catalysis. The active-site For ring-opening step is the glutamate 148.

This sequence belongs to the glucosamine/galactosamine-6-phosphate isomerase family. NagB subfamily. In terms of assembly, homohexamer.

It catalyses the reaction alpha-D-glucosamine 6-phosphate + H2O = beta-D-fructose 6-phosphate + NH4(+). It participates in amino-sugar metabolism; N-acetylneuraminate degradation; D-fructose 6-phosphate from N-acetylneuraminate: step 5/5. Its activity is regulated as follows. Allosterically activated by N-acetylglucosamine 6-phosphate (GlcNAc6P). Functionally, catalyzes the reversible isomerization-deamination of glucosamine 6-phosphate (GlcN6P) to form fructose 6-phosphate (Fru6P) and ammonium ion. This is Glucosamine-6-phosphate deaminase from Salmonella typhimurium (strain LT2 / SGSC1412 / ATCC 700720).